Consider the following 286-residue polypeptide: Shikimate dehydrogenase (NADP(+)) (286 aa).

Shikimate is bound by residues 19–21 (SVS) and T66. The active-site Proton acceptor is K70. The shikimate site is built by N91 and D106. Residues 130–134 (GAGGS) and A225 each bind NADP(+). Shikimate is bound at residue Y227. An NADP(+)-binding site is contributed by G248.

Belongs to the shikimate dehydrogenase family. Homodimer.

The catalysed reaction is shikimate + NADP(+) = 3-dehydroshikimate + NADPH + H(+). The protein operates within metabolic intermediate biosynthesis; chorismate biosynthesis; chorismate from D-erythrose 4-phosphate and phosphoenolpyruvate: step 4/7. In terms of biological role, involved in the biosynthesis of the chorismate, which leads to the biosynthesis of aromatic amino acids. Catalyzes the reversible NADPH linked reduction of 3-dehydroshikimate (DHSA) to yield shikimate (SA). The sequence is that of Shikimate dehydrogenase (NADP(+)) from Dehalococcoides mccartyi (strain ATCC BAA-2266 / KCTC 15142 / 195) (Dehalococcoides ethenogenes (strain 195)).